A 324-amino-acid polypeptide reads, in one-letter code: 2-oxoisovalerate dehydrogenase subunit beta (324 aa).

Residues Glu29, 58-60 (LSE), Gln82, and 86-89 (YIFP) contribute to the thiamine diphosphate site. Residues 83–86 (FADY) and His129 contribute to the substrate site. His129 serves as the catalytic Proton acceptor.

As to quaternary structure, heterotetramer of two alpha and two beta chains. Directly associated with ODBA in the E1 complex. The cofactor is thiamine diphosphate.

It catalyses the reaction N(6)-[(R)-lipoyl]-L-lysyl-[protein] + 3-methyl-2-oxobutanoate + H(+) = N(6)-[(R)-S(8)-2-methylpropanoyldihydrolipoyl]-L-lysyl-[protein] + CO2. The branched-chain alpha-keto dehydrogenase complex catalyzes the overall conversion of alpha-keto acids to acyl-CoA and CO(2). It contains multiple copies of three enzymatic components: branched-chain alpha-keto acid decarboxylase (E1), lipoamide acyltransferase (E2) and lipoamide dehydrogenase (E3). The polypeptide is 2-oxoisovalerate dehydrogenase subunit beta (Thermus thermophilus (strain ATCC BAA-163 / DSM 7039 / HB27)).